The primary structure comprises 279 residues: Thymidylate synthase (279 aa).

A dUMP-binding site is contributed by 133-134; that stretch reads RR. Cys154 acts as the Nucleophile in catalysis. DUMP is bound by residues 178 to 181, Asn189, and 219 to 221; these read RSND and HIY. Asp181 contributes to the (6R)-5,10-methylene-5,6,7,8-tetrahydrofolate binding site. Ala278 serves as a coordination point for (6R)-5,10-methylene-5,6,7,8-tetrahydrofolate.

It belongs to the thymidylate synthase family. Bacterial-type ThyA subfamily. In terms of assembly, homodimer.

The protein localises to the cytoplasm. The catalysed reaction is dUMP + (6R)-5,10-methylene-5,6,7,8-tetrahydrofolate = 7,8-dihydrofolate + dTMP. Its pathway is pyrimidine metabolism; dTTP biosynthesis. Catalyzes the reductive methylation of 2'-deoxyuridine-5'-monophosphate (dUMP) to 2'-deoxythymidine-5'-monophosphate (dTMP) while utilizing 5,10-methylenetetrahydrofolate (mTHF) as the methyl donor and reductant in the reaction, yielding dihydrofolate (DHF) as a by-product. This enzymatic reaction provides an intracellular de novo source of dTMP, an essential precursor for DNA biosynthesis. This is Thymidylate synthase from Streptococcus pneumoniae (strain 70585).